Consider the following 379-residue polypeptide: Pentatricopeptide repeat-containing protein At3g25210, mitochondrial (379 aa).

6 PPR repeats span residues 142–177 (SVPL…DDSK), 179–221 (DLET…GVIP), 222–256 (DTFV…GSEP), 257–291 (NAYT…GMVP), 292–326 (NGSC…SLSP), and 327–361 (DMLT…DPVM).

It belongs to the PPR family. P subfamily.

The protein resides in the mitochondrion. This Arabidopsis thaliana (Mouse-ear cress) protein is Pentatricopeptide repeat-containing protein At3g25210, mitochondrial.